The sequence spans 215 residues: Probable phosphoglycerate mutase GpmB (215 aa).

Substrate is bound by residues 8–15 (RHGETQWN), 21–22 (QG), R58, R60, 82–85 (ELNM), 104–105 (RR), and 151–152 (GI). H9 functions as the Tele-phosphohistidine intermediate in the catalytic mechanism. The active-site Proton donor/acceptor is the E82.

It belongs to the phosphoglycerate mutase family. GpmB subfamily.

It carries out the reaction (2R)-2-phosphoglycerate = (2R)-3-phosphoglycerate. The protein operates within carbohydrate degradation; glycolysis; pyruvate from D-glyceraldehyde 3-phosphate: step 3/5. The sequence is that of Probable phosphoglycerate mutase GpmB from Escherichia coli O9:H4 (strain HS).